The sequence spans 464 residues: Argininosuccinate lyase (464 aa).

Belongs to the lyase 1 family. Argininosuccinate lyase subfamily.

It is found in the cytoplasm. It catalyses the reaction 2-(N(omega)-L-arginino)succinate = fumarate + L-arginine. It participates in amino-acid biosynthesis; L-arginine biosynthesis; L-arginine from L-ornithine and carbamoyl phosphate: step 3/3. This is Argininosuccinate lyase from Azotobacter vinelandii (strain DJ / ATCC BAA-1303).